The sequence spans 155 residues: Protein-export protein SecB (155 aa).

It belongs to the SecB family. Homotetramer, a dimer of dimers. One homotetramer interacts with 1 SecA dimer.

It localises to the cytoplasm. One of the proteins required for the normal export of preproteins out of the cell cytoplasm. It is a molecular chaperone that binds to a subset of precursor proteins, maintaining them in a translocation-competent state. It also specifically binds to its receptor SecA. The polypeptide is Protein-export protein SecB (Vibrio atlanticus (strain LGP32) (Vibrio splendidus (strain Mel32))).